A 361-amino-acid chain; its full sequence is tRNA 2-selenouridine synthase (361 aa).

The 124-residue stretch at Leu14–Ile137 folds into the Rhodanese domain. The active-site S-selanylcysteine intermediate is Cys97.

Belongs to the SelU family. Monomer.

The catalysed reaction is 5-methylaminomethyl-2-thiouridine(34) in tRNA + selenophosphate + (2E)-geranyl diphosphate + H2O + H(+) = 5-methylaminomethyl-2-selenouridine(34) in tRNA + (2E)-thiogeraniol + phosphate + diphosphate. It carries out the reaction 5-methylaminomethyl-2-thiouridine(34) in tRNA + (2E)-geranyl diphosphate = 5-methylaminomethyl-S-(2E)-geranyl-thiouridine(34) in tRNA + diphosphate. It catalyses the reaction 5-methylaminomethyl-S-(2E)-geranyl-thiouridine(34) in tRNA + selenophosphate + H(+) = 5-methylaminomethyl-2-(Se-phospho)selenouridine(34) in tRNA + (2E)-thiogeraniol. The enzyme catalyses 5-methylaminomethyl-2-(Se-phospho)selenouridine(34) in tRNA + H2O = 5-methylaminomethyl-2-selenouridine(34) in tRNA + phosphate. In terms of biological role, involved in the post-transcriptional modification of the uridine at the wobble position (U34) of tRNA(Lys), tRNA(Glu) and tRNA(Gln). Catalyzes the conversion of 2-thiouridine (S2U-RNA) to 2-selenouridine (Se2U-RNA). Acts in a two-step process involving geranylation of 2-thiouridine (S2U) to S-geranyl-2-thiouridine (geS2U) and subsequent selenation of the latter derivative to 2-selenouridine (Se2U) in the tRNA chain. The protein is tRNA 2-selenouridine synthase of Escherichia coli O6:H1 (strain CFT073 / ATCC 700928 / UPEC).